The sequence spans 563 residues: Testis-expressed basic protein 1 (563 aa).

The chain crosses the membrane as a helical span at residues V3 to L23. The tract at residues G56–P81 is disordered. The span at Y69 to Y79 shows a compositional bias: basic and acidic residues. A helical transmembrane segment spans residues E99–I119. Residues S311–E563 form a disordered region. Residues Q367–V383 are compositionally biased toward basic and acidic residues. Over residues K384–E395 the composition is skewed to low complexity. 2 stretches are compositionally biased toward basic and acidic residues: residues Q412–E447 and E485–K544.

The protein resides in the membrane. This is Testis-expressed basic protein 1 from Homo sapiens (Human).